A 146-amino-acid chain; its full sequence is 3-hydroxyacyl-[acyl-carrier-protein] dehydratase FabZ (146 aa).

The active site involves His-49.

This sequence belongs to the thioester dehydratase family. FabZ subfamily.

The protein resides in the cytoplasm. It catalyses the reaction a (3R)-hydroxyacyl-[ACP] = a (2E)-enoyl-[ACP] + H2O. Its function is as follows. Involved in unsaturated fatty acids biosynthesis. Catalyzes the dehydration of short chain beta-hydroxyacyl-ACPs and long chain saturated and unsaturated beta-hydroxyacyl-ACPs. The polypeptide is 3-hydroxyacyl-[acyl-carrier-protein] dehydratase FabZ (Pseudomonas syringae pv. tomato (strain ATCC BAA-871 / DC3000)).